The chain runs to 60 residues: Arabinogalactan protein 12 (60 aa).

Positions M1 to A27 are cleaved as a signal peptide. A Pyrrolidone carboxylic acid modification is found at Q28. 4-hydroxyproline occurs at positions 32, 34, and 36. P32, P34, and P36 each carry an O-linked (Ara...) hydroxyproline glycan. S38 is lipidated: GPI-anchor amidated serine. A propeptide spans D39 to F60 (removed in mature form).

This sequence belongs to the AG-peptide AGP family. In terms of processing, contains 4-hydroxyproline; hydroxylated on Pro-32, Pro-34 and Pro-36. Post-translationally, O-glycosylated on hydroxyprolines; noncontiguous hydroxylproline residues are glycosylated with arabinogalactan. In terms of tissue distribution, expressed in reproductive tissues. Expressed in chalaza, funiculus, stigma, septum, style and transmitting tract.

It is found in the cell membrane. Proteoglycan that seems to be implicated in diverse developmental roles such as differentiation, cell-cell recognition, embryogenesis and programmed cell death. The protein is Arabinogalactan protein 12 of Arabidopsis thaliana (Mouse-ear cress).